The sequence spans 157 residues: Cyclic pyranopterin monophosphate synthase (157 aa).

Substrate-binding positions include 74–76 (MCH) and 111–112 (ME). The active site involves Asp-126.

Belongs to the MoaC family. In terms of assembly, homohexamer; trimer of dimers.

It carries out the reaction (8S)-3',8-cyclo-7,8-dihydroguanosine 5'-triphosphate = cyclic pyranopterin phosphate + diphosphate. It participates in cofactor biosynthesis; molybdopterin biosynthesis. Its function is as follows. Catalyzes the conversion of (8S)-3',8-cyclo-7,8-dihydroguanosine 5'-triphosphate to cyclic pyranopterin monophosphate (cPMP). The polypeptide is Cyclic pyranopterin monophosphate synthase (Carboxydothermus hydrogenoformans (strain ATCC BAA-161 / DSM 6008 / Z-2901)).